The primary structure comprises 194 residues: WASH complex subunit 3 (194 aa).

At Met-1 the chain carries N-acetylmethionine. Residues 46–74 adopt a coiled-coil conformation; it reads TVCEEKLADLSLRIQQIETTLNILDAKLS. Disordered regions lie at residues 93-121 and 159-194; these read SVTN…QESE and EGLD…SFSD. The span at 103–121 shows a compositional bias: polar residues; it reads TSEQPQQNSTQDSGLQESE.

The protein belongs to the CCDC53 family. In terms of assembly, component of the WASH core complex also described as WASH regulatory complex (SHRC) composed of WASH (WASHC1, WASH2P or WASH3P), WASHC2 (WASHC2A or WASHC2C), WASHC3, WASHC4 and WASHC5. The WASH core complex associates via WASHC2 with the F-actin-capping protein dimer (formed by CAPZA1, CAPZA2 or CAPZA3 and CAPZB) in a transient or substoichiometric manner which was initially described as WASH complex.

It localises to the early endosome. In terms of biological role, acts as a component of the WASH core complex that functions as a nucleation-promoting factor (NPF) at the surface of endosomes, where it recruits and activates the Arp2/3 complex to induce actin polymerization, playing a key role in the fission of tubules that serve as transport intermediates during endosome sorting. The sequence is that of WASH complex subunit 3 from Homo sapiens (Human).